We begin with the raw amino-acid sequence, 363 residues long: Flagellar P-ring protein (363 aa).

The signal sequence occupies residues 1–21; the sequence is MKTVINIFILFTFLASLSANA.

Belongs to the FlgI family. The basal body constitutes a major portion of the flagellar organelle and consists of four rings (L,P,S, and M) mounted on a central rod.

Its subcellular location is the periplasm. The protein resides in the bacterial flagellum basal body. Its function is as follows. Assembles around the rod to form the L-ring and probably protects the motor/basal body from shearing forces during rotation. This Colwellia psychrerythraea (strain 34H / ATCC BAA-681) (Vibrio psychroerythus) protein is Flagellar P-ring protein.